Reading from the N-terminus, the 435-residue chain is MNNIVIVGLQWGDEGKGKIVDYLSENADTVVRFQGGNNAGHTIVVDDEVYKLNLLPSAVLRTGKISIIGNGVALDPYALISEIESLRVKGMDINPNNLMVSESCPLILSVHKEKEKLFEDLNGNHKIGTTNKGIGPCYEDKVGRRAIRLCDLENADELNKRLDTLLNYHNAIRKGLSYRVIKKEEMLREIEEIAEKIIPYRKPVWKILNDFVKEGKKIIFEGAQGTFLDIDHGTYPFVTSSNTIASQVMTGSGLSSNAYVIGVAKAYTTRVGNGPFPTEQRNEVGNSLFTIGKELGTVSNRKRRCGWFDAVLVRQAVQLSGVSSIILTKLDVLDSFDKIKICTGYQYSGKIYDYLPASRSIQEELEPIYEEFPGWKENTQGEKLAEKLPVNLIKYVKRVEELIGIPIHLISAGPKREDVIKLKDFKFSESVLVSY.

Residues 12–18 and 40–42 contribute to the GTP site; these read GDEGKGK and GHT. Asp13 acts as the Proton acceptor in catalysis. Mg(2+) contacts are provided by Asp13 and Gly40. IMP-binding positions include 13-16, 38-41, Thr130, Arg144, Gln224, Thr239, and Arg301; these read DEGK and NAGH. The Proton donor role is filled by His41. 297–303 serves as a coordination point for substrate; it reads TVSNRKR. Residues Arg303, 329 to 331, and 411 to 413 each bind GTP; these read KLD and SAG.

The protein belongs to the adenylosuccinate synthetase family. As to quaternary structure, homodimer. Requires Mg(2+) as cofactor.

The protein localises to the cytoplasm. It carries out the reaction IMP + L-aspartate + GTP = N(6)-(1,2-dicarboxyethyl)-AMP + GDP + phosphate + 2 H(+). The protein operates within purine metabolism; AMP biosynthesis via de novo pathway; AMP from IMP: step 1/2. Plays an important role in the de novo pathway of purine nucleotide biosynthesis. Catalyzes the first committed step in the biosynthesis of AMP from IMP. This Wolbachia sp. subsp. Brugia malayi (strain TRS) protein is Adenylosuccinate synthetase.